Consider the following 90-residue polypeptide: Small ribosomal subunit protein uS15 (90 aa).

It belongs to the universal ribosomal protein uS15 family. Part of the 30S ribosomal subunit. Forms a bridge to the 50S subunit in the 70S ribosome, contacting the 23S rRNA.

In terms of biological role, one of the primary rRNA binding proteins, it binds directly to 16S rRNA where it helps nucleate assembly of the platform of the 30S subunit by binding and bridging several RNA helices of the 16S rRNA. Functionally, forms an intersubunit bridge (bridge B4) with the 23S rRNA of the 50S subunit in the ribosome. The sequence is that of Small ribosomal subunit protein uS15 from Helicobacter pylori (strain P12).